Consider the following 360-residue polypeptide: Probable CCR4-associated factor 1 homolog 1 (360 aa).

A divalent metal cation contacts are provided by Asp-37, Glu-39, Asp-155, and Asp-226.

It belongs to the CAF1 family. In terms of assembly, component of the CCR4-NOT complex, at least composed of CRR4 and CAF1 proteins. The cofactor is a divalent metal cation.

It localises to the nucleus. The protein resides in the cytoplasm. It carries out the reaction Exonucleolytic cleavage of poly(A) to 5'-AMP.. Functionally, ubiquitous transcription factor required for a diverse set of processes. It is a component of the CCR4 complex involved in the control of gene expression. The polypeptide is Probable CCR4-associated factor 1 homolog 1 (CAF1-1) (Arabidopsis thaliana (Mouse-ear cress)).